The chain runs to 594 residues: Grainyhead-like protein 3 homolog (594 aa).

2 transcription activation regions span residues 25–75 and 28–91; these read NDDE…RIIT and EAWS…SCIE. Residues 220-453 form the Grh/CP2 DB domain; the sequence is ANRDFECTLE…DMETHPVLFI (234 aa). The segment at 483 to 503 is disordered; it reads SSQSFPESFEAPPSKQQTNED.

It belongs to the grh/CP2 family. Grainyhead subfamily.

The protein resides in the nucleus. Its function is as follows. Transcription factor playing important roles in primary neurulation and in the differentiation of stratified epithelia of both ectodermal and endodermal origin. Binds directly to the consensus DNA sequence 5'-AACCGGTT-3' acting as an activator and repressor on distinct target genes. In Xenopus tropicalis (Western clawed frog), this protein is Grainyhead-like protein 3 homolog (grhl3).